The chain runs to 958 residues: Unconventional myosin-Ih (958 aa).

The 680-residue stretch at 12 to 691 folds into the Myosin motor domain; sequence GVQDFVLLDA…TLFATEDAFE (680 aa). 105 to 112 contacts ATP; it reads GESGAGKT. A Phosphoserine modification is found at S365. Residues 568–590 form an actin-binding region; sequence LSSLLEILISKEPSYIRCIKPNE. 2 IQ domains span residues 694–716 and 717–746; these read KHQL…EYMK and KRQA…AVQI. A TH1 domain is found at 773–955; it reads RKNYILNLRY…NGQLRVVSAG (183 aa).

The protein belongs to the TRAFAC class myosin-kinesin ATPase superfamily. Myosin family. In terms of tissue distribution, highly expressed in the central nervous system, including the forebrain, midbrain and lower medulla. In the lower medulla, it is broadly expressed throughout the reticular formation. It is expressed in the retrotrapezoid nucleus and the nucleus of the solitary tract, as well as motor neurons of the facial, vagal and ambiguus nuclei. Expressed in neonatal inner-ear organs.

Myosins are actin-based motor molecules with ATPase activity. Unconventional myosins serve in intracellular movements. Their highly divergent tails are presumed to bind to membranous compartments, which would be moved relative to actin filaments. This is Unconventional myosin-Ih (Myo1h) from Mus musculus (Mouse).